Reading from the N-terminus, the 166-residue chain is Large ribosomal subunit protein uL10 (166 aa).

Belongs to the universal ribosomal protein uL10 family. As to quaternary structure, part of the ribosomal stalk of the 50S ribosomal subunit. The N-terminus interacts with L11 and the large rRNA to form the base of the stalk. The C-terminus forms an elongated spine to which L12 dimers bind in a sequential fashion forming a multimeric L10(L12)X complex.

Forms part of the ribosomal stalk, playing a central role in the interaction of the ribosome with GTP-bound translation factors. In Pseudomonas syringae pv. syringae (strain B728a), this protein is Large ribosomal subunit protein uL10.